A 496-amino-acid chain; its full sequence is 2,3-bisphosphoglycerate-independent phosphoglycerate mutase (496 aa).

Mn(2+) is bound by residues Asp-12 and Ser-62. Ser-62 acts as the Phosphoserine intermediate in catalysis. Substrate is bound by residues His-121, Arg-150–Asp-151, Arg-181, Arg-187, Arg-252–Arg-255, and Lys-317. Mn(2+) contacts are provided by Asp-384, His-388, Asp-425, His-426, and His-444.

This sequence belongs to the BPG-independent phosphoglycerate mutase family. In terms of assembly, monomer. Requires Mn(2+) as cofactor.

The catalysed reaction is (2R)-2-phosphoglycerate = (2R)-3-phosphoglycerate. It functions in the pathway carbohydrate degradation; glycolysis; pyruvate from D-glyceraldehyde 3-phosphate: step 3/5. In terms of biological role, catalyzes the interconversion of 2-phosphoglycerate and 3-phosphoglycerate. In Anaplasma phagocytophilum (strain HZ), this protein is 2,3-bisphosphoglycerate-independent phosphoglycerate mutase.